The sequence spans 227 residues: Trypsin (227 aa).

Residues 1–223 enclose the Peptidase S1 domain; the sequence is IVGGEDANVQ…YYDVLMEQIN (223 aa). A disulfide bridge connects residues C27 and C43. Catalysis depends on charge relay system residues H42 and D88. Cystine bridges form between C150/C164 and C175/C199. The Charge relay system role is filled by S179.

It belongs to the peptidase S1 family.

It carries out the reaction Preferential cleavage: Arg-|-Xaa, Lys-|-Xaa.. This chain is Trypsin, found in Saccharopolyspora erythraea (Streptomyces erythraeus).